Reading from the N-terminus, the 253-residue chain is Phosphate import ATP-binding protein PstB 1 (253 aa).

Residues 7–248 form the ABC transporter domain; it reads LTVSDLSLYY…PEKQETSDYI (242 aa). An ATP-binding site is contributed by 39 to 46; the sequence is GPSGCGKS.

Belongs to the ABC transporter superfamily. Phosphate importer (TC 3.A.1.7) family. As to quaternary structure, the complex is composed of two ATP-binding proteins (PstB), two transmembrane proteins (PstC and PstA) and a solute-binding protein (PstS).

It is found in the cell membrane. The enzyme catalyses phosphate(out) + ATP + H2O = ADP + 2 phosphate(in) + H(+). Its function is as follows. Part of the ABC transporter complex PstSACB involved in phosphate import. Responsible for energy coupling to the transport system. The polypeptide is Phosphate import ATP-binding protein PstB 1 (Lactococcus lactis subsp. lactis (strain IL1403) (Streptococcus lactis)).